The primary structure comprises 183 residues: Adenine phosphoribosyltransferase (183 aa).

It belongs to the purine/pyrimidine phosphoribosyltransferase family. Homodimer.

It is found in the cytoplasm. The catalysed reaction is AMP + diphosphate = 5-phospho-alpha-D-ribose 1-diphosphate + adenine. It functions in the pathway purine metabolism; AMP biosynthesis via salvage pathway; AMP from adenine: step 1/1. Functionally, catalyzes a salvage reaction resulting in the formation of AMP, that is energically less costly than de novo synthesis. This is Adenine phosphoribosyltransferase from Corynebacterium kroppenstedtii (strain DSM 44385 / JCM 11950 / CIP 105744 / CCUG 35717).